The following is a 269-amino-acid chain: MTGLLEGKRILVTGIITDSSIAFHIAKVAQEAGAELVLTGFDRLKLVKRIADRLPKPAPLLELDVQNEEHLSTLADRITAEIGEGNKIDGVVHSIGFMPQSGMGINPFFDAPYEDVSKGIHISAYSYASLAKAVLPIMNPGGGIVGMDFDPTRAMPAYNWMTVAKSALESVNRFVAREAGKVGVRSNLVAAGPIRTLAMSAIVGGALGDEAGQQMQLLEEGWDQRAPLGWNMKDPTPVAKTVCALLSDWLPATTGTVIYADGGASTQLL.

Residues S20 to I21, D64 to V65, and I95 to G96 contribute to the NAD(+) site. Y158 is a binding site for substrate. Residues K165 and I194 each coordinate NAD(+). T266 bears the Phosphothreonine mark.

This sequence belongs to the short-chain dehydrogenases/reductases (SDR) family. FabI subfamily. Homodimer. Homotetramer. In terms of processing, is phosphorylated in vivo. Phosphorylation on Thr-266 decreases enzymatic activity.

The protein resides in the secreted. It localises to the cell wall. The catalysed reaction is a 2,3-saturated acyl-[ACP] + NAD(+) = a (2E)-enoyl-[ACP] + NADH + H(+). The enzyme catalyses a 2,3-saturated acyl-CoA + NAD(+) = a (2E)-enoyl-CoA + NADH + H(+). It carries out the reaction (2E)-octenoyl-CoA + NADH + H(+) = octanoyl-CoA + NAD(+). It catalyses the reaction (2E)-dodecenoyl-CoA + NADH + H(+) = dodecanoyl-CoA + NAD(+). Its pathway is lipid metabolism; mycolic acid biosynthesis. Its activity is regulated as follows. InhA activity is controlled via phosphorylation: phosphorylation on Thr-266 decreases InhA activity and likely negatively regulates biosynthesis of mycolic acids and growth of the bacterium. InhA activity is likely inhibited by activated isoniazid, hexadecynoyl-CoA and octadecynoyl-CoA, which also block the biosynthesis of mycolic acids. The antitubercular pro-drug isoniazid (INH) is oxidatively activated by the catalase-peroxidase KatG and then covalently binds NAD to form an adduct that inhibits the activity of InhA. The inhibitory adduct is the isonicotinic-acyl-NADH where the isonicotinic-acyl group replaces the 4S (and not the 4R) hydrogen of NADH. Similarly, the antitubercular pro-drugs ethionamide (ETH) and prothionamide (PTH) are activated by the flavoprotein monooxygenase EthA, and forms an adduct with NAD (ETH-NAD and PTH-NAD, respectively) that is a tight-binding inhibitor of InhA. In terms of biological role, enoyl-ACP reductase of the type II fatty acid syntase (FAS-II) system, which is involved in the biosynthesis of mycolic acids, a major component of mycobacterial cell walls. Catalyzes the NADH-dependent reduction of the double bond of 2-trans-enoyl-[acyl-carrier protein], an essential step in the fatty acid elongation cycle of the FAS-II pathway. Shows preference for long-chain fatty acyl thioester substrates (&gt;C16), and can also use 2-trans-enoyl-CoAs as alternative substrates. The mycobacterial FAS-II system utilizes the products of the FAS-I system as primers to extend fatty acyl chain lengths up to C56, forming the meromycolate chain that serves as the precursor for final mycolic acids. Functionally, is the primary target of the first-line antitubercular drug isoniazid (INH) and of the second-line drug ethionamide (ETH). Overexpressed inhA confers INH and ETH resistance to M.smegmatis. The mechanism of isoniazid action against InhA is covalent attachment of the activated form of the drug to the nicotinamide ring of NAD and binding of the INH-NAD adduct to the active site of InhA. Similarly, the ETH-NAD adduct binds InhA. This is Enoyl-[acyl-carrier-protein] reductase [NADH] from Mycolicibacterium smegmatis (strain ATCC 700084 / mc(2)155) (Mycobacterium smegmatis).